The following is a 970-amino-acid chain: MGKPEARSGWRNAAAAAWVLVAVACAAYMHWHLRRETMDRAEERLVSMCEERARMLQEQFGVTVNHVHALAILISTFHFEKFPSAIDQDTFAKYTARTSFERPLLNGVAYAQRIFHHEREMFENQQGWIMKTMKRQAAPPQDEYAPVIFSQDTVSYLARIDMMSGEEDRENILRARATGKAVLTNPFRLLGSNHLGVVLTFAVYRPGLAADASVEERVEATAGYLGGAFDVESLVENLLSKLAGNQDIVVNVYDVTNASEPMAMYGPQSPDGKVSLFHVSTLDFGDPFRAHEMRCRYRQKPPLPWSAITNPLGTFVIWMLVGYIICAAWSRYDKVSEDCRKMEELKTQAEAADVAKSQFLATVSHEIRTPMNGVLGMLDMLLGTDLSMTQKDYAQTAQMCGRALITLINDVLDRAKIEAGKLELEAVPFDLRSLMDDVISLFSSKSREKCIELAVFVCDDVPKVVIGDPWRYRQILTNLVGNAVKFTERGHVFVRVCLAENSKVEANQVLNGTMNGKDGKVETTANGAFNTLSGFQAADERNNWDYFKLLLSDKEPHMDELECDRSYQNDCDCVTLMISIEDTGVGIPLHAQDRVFTPFMQADSSTSRNYGGTGIGLSISKCLAELMGGQISFTSRPFVGSTFTFSAVLKRSCKDTSSDSKRSLSEALPTAFKGMKAILVDGRPVRGAVTRYHLNRLGIVVKVVNNLSMGLQTLAGQNGVKESREKLSMLFIESDIWRPETDILLLNRLHELKNNGQVHELPKLVLLVTSEADKDRYGSAFDIVMYKPIRASTIASCLQQLLKVVMPERKDNQNRPSFLRSLLIGKNILIVDDNKVNLRVAAAALKKYGAKVHCVESGKDAVSLLQQPHCFDACFMDVQMPEMDGFEATRQIRQMEVKANEERKALDLMEGSTFVESHLPVLAMTADVIQATYEECIKSGMDGYVSKPFDEEQLYQAVSRLVVGTKESAV.

Residues 1–12 lie on the Cytoplasmic side of the membrane; the sequence is MGKPEARSGWRN. Residues 13–33 traverse the membrane as a helical segment; that stretch reads AAAAAWVLVAVACAAYMHWHL. At 34–306 the chain is on the extracellular side; that stretch reads RRETMDRAEE…YRQKPPLPWS (273 aa). The 213-residue stretch at 82-294 folds into the CHASE domain; the sequence is FPSAIDQDTF…GDPFRAHEMR (213 aa). The helical transmembrane segment at 307–327 threads the bilayer; it reads AITNPLGTFVIWMLVGYIICA. Over 328–970 the chain is Cytoplasmic; that stretch reads AWSRYDKVSE…LVVGTKESAV (643 aa). The region spanning 362–651 is the Histidine kinase domain; that stretch reads TVSHEIRTPM…TFTFSAVLKR (290 aa). Histidine 365 carries the post-translational modification Phosphohistidine; by autocatalysis. Response regulatory domains are found at residues 676–802 and 827–962; these read KAIL…QQLL and NILI…SRLV. Residue aspartate 877 is modified to 4-aspartylphosphate.

In terms of processing, activation probably requires a transfer of a phosphate group between a His in the transmitter domain and an Asp of the receiver domain. In terms of tissue distribution, highly expressed in spikelets and at lower levels in roots, young leaves, mature leaves and stems.

It localises to the cell membrane. The catalysed reaction is ATP + protein L-histidine = ADP + protein N-phospho-L-histidine.. Its function is as follows. Cytokinin receptor related to bacterial two-component regulators. Functions as a histidine kinase and transmits the stress signal to a downstream MAPK cascade. The polypeptide is Probable histidine kinase 6 (Oryza sativa subsp. japonica (Rice)).